The sequence spans 63 residues: Sec-independent protein translocase protein TatA (63 aa).

The helical transmembrane segment at 1-21 (MGGLSVGSVVLIALVALLIFG) threads the bilayer.

This sequence belongs to the TatA/E family. In terms of assembly, forms a complex with TatC.

The protein localises to the cell membrane. Functionally, part of the twin-arginine translocation (Tat) system that transports large folded proteins containing a characteristic twin-arginine motif in their signal peptide across membranes. TatA could form the protein-conducting channel of the Tat system. In Shouchella clausii (strain KSM-K16) (Alkalihalobacillus clausii), this protein is Sec-independent protein translocase protein TatA.